Consider the following 198-residue polypeptide: NAD(P)H dehydrogenase (quinone) (198 aa).

Positions 4 to 189 constitute a Flavodoxin-like domain; that stretch reads VLVLYYSMYG…SIARYQGEYV (186 aa). FMN-binding positions include 10–15 and 78–80; these read SMYGHI and TRF. Tyrosine 12 is an NAD(+) binding site. Tryptophan 98 contributes to the substrate binding site. Residues 113–118 and histidine 133 each bind FMN; that span reads STGTGG.

It belongs to the WrbA family. It depends on FMN as a cofactor.

The catalysed reaction is a quinone + NADH + H(+) = a quinol + NAD(+). It catalyses the reaction a quinone + NADPH + H(+) = a quinol + NADP(+). This chain is NAD(P)H dehydrogenase (quinone), found in Escherichia fergusonii (strain ATCC 35469 / DSM 13698 / CCUG 18766 / IAM 14443 / JCM 21226 / LMG 7866 / NBRC 102419 / NCTC 12128 / CDC 0568-73).